The sequence spans 90 residues: DNA-directed RNA polymerase subunit omega (90 aa).

The segment at 70 to 90 (QEQQEQEAAELAAVSSIMHNR) is disordered.

The protein belongs to the RNA polymerase subunit omega family. The RNAP catalytic core consists of 2 alpha, 1 beta, 1 beta' and 1 omega subunit. When a sigma factor is associated with the core the holoenzyme is formed, which can initiate transcription.

It carries out the reaction RNA(n) + a ribonucleoside 5'-triphosphate = RNA(n+1) + diphosphate. Functionally, promotes RNA polymerase assembly. Latches the N- and C-terminal regions of the beta' subunit thereby facilitating its interaction with the beta and alpha subunits. The polypeptide is DNA-directed RNA polymerase subunit omega (Vibrio cholerae serotype O1 (strain ATCC 39541 / Classical Ogawa 395 / O395)).